Consider the following 474-residue polypeptide: Probable multidrug resistance protein NorM (474 aa).

12 helical membrane passes run 33–50 (LWLA…IAMM), 65–87 (VAAA…GLVS), 108–130 (SLRV…QLYG), 150–172 (YLDG…GLMG), 179–201 (PALW…LIHG), 211–233 (FGAG…VVCV), 258–280 (LLQL…GAAA), 295–317 (QIAL…AATV), 334–356 (AGFA…VALT), 376–398 (TLTA…QVVA), 410–432 (VPLL…VLGF), and 436–458 (LGPF…LLVW).

This sequence belongs to the multi antimicrobial extrusion (MATE) (TC 2.A.66.1) family.

The protein resides in the cell inner membrane. Functionally, multidrug efflux pump. In Rhodopseudomonas palustris (strain ATCC BAA-98 / CGA009), this protein is Probable multidrug resistance protein NorM (norM).